A 96-amino-acid chain; its full sequence is Protein Vpr (96 aa).

The tract at residues 1-42 (MEQAPEDQGPQREPYNEWTIEILEELKREAVRHFPRPWLHDL) is homooligomerization. A phosphoserine; by host mark is found at serine 79, serine 94, and serine 96.

Belongs to the HIV-1 VPR protein family. Homooligomer, may form homodimer. Interacts with p6-gag region of the Pr55 Gag precursor protein through a (Leu-X-X)4 motif near the C-terminus of the P6gag protein. Interacts with host UNG. May interact with host RAD23A/HHR23A. Interacts with host VPRBP/DCAF1, leading to hijack the CUL4A-RBX1-DDB1-DCAF1/VPRBP complex, mediating ubiquitination of host proteins such as TERT and ZGPAT and arrest of the cell cycle in G2 phase. In terms of processing, phosphorylated on several residues by host. These phosphorylations regulate VPR activity for the nuclear import of the HIV-1 pre-integration complex.

The protein localises to the virion. The protein resides in the host nucleus. It is found in the host extracellular space. During virus replication, may deplete host UNG protein, and incude G2-M cell cycle arrest. Acts by targeting specific host proteins for degradation by the 26S proteasome, through association with the cellular CUL4A-DDB1 E3 ligase complex by direct interaction with host VPRPB/DCAF-1. Cell cycle arrest reportedly occurs within hours of infection and is not blocked by antiviral agents, suggesting that it is initiated by the VPR carried into the virion. Additionally, VPR induces apoptosis in a cell cycle dependent manner suggesting that these two effects are mechanistically linked. Detected in the serum and cerebrospinal fluid of AIDS patient, VPR may also induce cell death to bystander cells. Functionally, during virus entry, plays a role in the transport of the viral pre-integration (PIC) complex to the host nucleus. This function is crucial for viral infection of non-dividing macrophages. May act directly at the nuclear pore complex, by binding nucleoporins phenylalanine-glycine (FG)-repeat regions. The polypeptide is Protein Vpr (Human immunodeficiency virus type 1 group M subtype K (isolate 97ZR-EQTB11) (HIV-1)).